A 431-amino-acid polypeptide reads, in one-letter code: MAKIINIIGREIMDSRGNPTVEAEVHLEGGFMGMAAAPSGASTGSREALELRDGDKARYMGKGVLKAVENINGLIRDALMGKDATAQAELDQIMIDVDGTENKDKLGANAILAVSLAAAKAAAAFKGVPLYAHIADLNGTPGQYSMPVPMMNILNGGEHADNNVDIQEFMVQPVGAKSFREALRMGAEIFHSLKSVLKSKGLSTSVGDEGGFAPDLASNADALAIIKVAVEQAGYTLGTDVTLALDCAASEFYKDGQYDLSGEGKVFSANGFSDFLKSLTEQYPIASIEDGLDESDWDGWAYQTQIMGDKIQLVGDDLFVTNTKILKRGIDNGIANSILIKFNQIGSLTETLAAIRMAKEAGYTVVISHRSGETEDATIADLAVATSAGQIKTGSLCRSDRVAKYNQLLRIEEQLGEKAPYNGLKEIKGQA.

Gln167 lines the (2R)-2-phosphoglycerate pocket. The active-site Proton donor is Glu209. Residues Asp246, Glu289, and Asp316 each coordinate Mg(2+). (2R)-2-phosphoglycerate contacts are provided by Lys341, Arg370, Ser371, and Lys392. The active-site Proton acceptor is Lys341.

Belongs to the enolase family. Component of the RNA degradosome, a multiprotein complex involved in RNA processing and mRNA degradation. Mg(2+) is required as a cofactor.

It is found in the cytoplasm. It localises to the secreted. The protein resides in the cell surface. It catalyses the reaction (2R)-2-phosphoglycerate = phosphoenolpyruvate + H2O. It functions in the pathway carbohydrate degradation; glycolysis; pyruvate from D-glyceraldehyde 3-phosphate: step 4/5. Catalyzes the reversible conversion of 2-phosphoglycerate (2-PG) into phosphoenolpyruvate (PEP). It is essential for the degradation of carbohydrates via glycolysis. The chain is Enolase from Shewanella pealeana (strain ATCC 700345 / ANG-SQ1).